The chain runs to 564 residues: Diacylglycerol kinase epsilon (564 aa).

Residues 20–40 (LVLWTLCSVLLPVFITLWCSL) form a helical membrane-spanning segment. 2 consecutive Phorbol-ester/DAG-type zinc fingers follow at residues 57 to 106 (KHCW…RFPC) and 121 to 174 (PHHW…SEKC). One can recognise a DAGKc domain in the interval 212–353 (KQWTPLIILA…LDRWKVQVTN (142 aa)).

Belongs to the eukaryotic diacylglycerol kinase family. Highly expressed in brain and heart. In brain, highly expressed in Purkinje cells of the cerebellum, pyramidal cells of the hippocampus, mitral cells of the olfactory bulb, and neurons of the substantia nigra. Lower expression in neurons of the thalamus, superior olive, and lateral reticular nucleus is also detected. Expressed in platelets.

It is found in the membrane. It localises to the cytoplasm. The catalysed reaction is a 1,2-diacyl-sn-glycerol + ATP = a 1,2-diacyl-sn-glycero-3-phosphate + ADP + H(+). It catalyses the reaction 1-hexadecanoyl-2-(5Z,8Z,11Z,14Z-eicosatetraenoyl)-sn-glycerol + ATP = 1-hexadecanoyl-2-(5Z,8Z,11Z,14Z-eicosatetraenoyl)-sn-glycero-3-phosphate + ADP + H(+). It carries out the reaction 1-octadecanoyl-2-(5Z,8Z,11Z,14Z-eicosatetraenoyl)-sn-glycerol + ATP = 1-octadecanoyl-2-(5Z,8Z,11Z,14Z-eicosatetraenoyl)-sn-glycero-3-phosphate + ADP + H(+). The enzyme catalyses 1-eicosanoyl-2-(5Z,8Z,11Z,14Z)-eicosatetraenoyl-sn-glycerol + ATP = 1-eicosanoyl-2-(5Z,8Z,11Z,14Z)-eicosatetraenoyl-sn-glycero-3-phosphate + ADP + H(+). The catalysed reaction is 1,2-di-(5Z,8Z,11Z,14Z)-eicosatetraenoyl-sn-glycerol + ATP = 1,2-di-(5Z,8Z,11Z,14Z)-eicosatetraenoyl-sn-glycero-3-phosphate + ADP + H(+). It catalyses the reaction 1-octadecanoyl-2-(9Z,12Z)-octadecadienoyl-sn-glycerol + ATP = 1-octadecanoyl-2-(9Z,12Z-octadecadienoyl)-sn-glycero-3-phosphate + ADP + H(+). It carries out the reaction 1,2-di-(9Z,12Z-octadecadienoyl)-sn-glycerol + ATP = 1,2-di-(9Z,12Z-octadecadienoyl)-sn-glycero-3-phosphate + ADP + H(+). The enzyme catalyses 1,2-di-(9Z-octadecenoyl)-sn-glycerol + ATP = 1,2-di-(9Z-octadecenoyl)-sn-glycero-3-phosphate + ADP + H(+). It participates in lipid metabolism; glycerolipid metabolism. Membrane-bound diacylglycerol kinase that converts diacylglycerol/DAG into phosphatidic acid/phosphatidate/PA and regulates the respective levels of these two bioactive lipids. Thereby, acts as a central switch between the signaling pathways activated by these second messengers with different cellular targets and opposite effects in numerous biological processes. Also plays an important role in the biosynthesis of complex lipids. Displays specificity for diacylglycerol substrates with an arachidonoyl acyl chain at the sn-2 position, with the highest activity toward 1-octadecanoyl-2-(5Z,8Z,11Z,14Z-eicosatetraenoyl)-sn-glycerol the main diacylglycerol intermediate within the phosphatidylinositol turnover cycle. Can also phosphorylate diacylglycerol substrates with a linoleoyl acyl chain at the sn-2 position but much less efficiently. In Mus musculus (Mouse), this protein is Diacylglycerol kinase epsilon (Dgke).